The sequence spans 391 residues: PPE family protein PPE18 (391 aa).

This sequence belongs to the mycobacterial PPE family. Interacts with human TLR2.

The protein localises to the secreted. It localises to the cell wall. Its subcellular location is the cell surface. Could be a crucial virulence factor for intracellular survival of M.tuberculosis. Favors development of Th2-type response, and down-regulates the pro-inflammatory and Th1-type response. Specifically interacts with the human Toll-like receptor 2 (TLR2), leading to an early and sustained activation of p38 MAPK, which induces IL-10 production and activates Th2-type immune response. Also inhibits pro-inflammatory cytokines IL-12p40 and TNF-alpha production. Acts by up-regulating the expression as well as tyrosine phosphorylation of suppressor of cytokine signaling 3 (SOCS-3), leading to the inhibition of phosphorylation of I-kappa-B-alpha, thereby preventing nuclear translocation of the NF-kappa-B/REL subunits and expression of NF-kappa-B regulated genes like IL-12 and TNF-alpha. Induction of SOCS-3 probably depends on the activation of p38 MAPK. This is PPE family protein PPE18 from Mycobacterium tuberculosis (strain ATCC 25618 / H37Rv).